A 249-amino-acid chain; its full sequence is MLRTTVVLLTLAAIAFAAPTSDDIYNNVVIGDIDGAVAKSKELQKQGKGDIITEAVNRLIRDSQRNTMEYAYQLWSLEARDIVKERFPIQFRMMLGEHSIKLINKRDNLAMKLGVATDNSGDRIAYGAADDKTSDRVAWKFVPLSEDKRVYFKILNVQRGQYLKLGVETDSDGEHMAYASSGADTFRHQWYLQPAKADGNLVFFIVNREYNHALKLGRSVDSMGDRQVWGHNGNVIGNPELFGWSVVAF.

The first 17 residues, 1-17, serve as a signal peptide directing secretion; that stretch reads MLRTTVVLLTLAAIAFA.

Functionally, small vitellogenic protein found in females. It is synthesized in the fat body, secreted into the hemolymph, and taken up by developing oocytes. This chain is Microvitellogenin (MVG), found in Manduca sexta (Tobacco hawkmoth).